The sequence spans 328 residues: Malate dehydrogenase (328 aa).

11 to 17 (GAAGQIG) is a binding site for NAD(+). 2 residues coordinate substrate: R94 and R100. Residues N107, Q114, and 131 to 133 (VGN) contribute to the NAD(+) site. Positions 133 and 164 each coordinate substrate. H189 functions as the Proton acceptor in the catalytic mechanism.

This sequence belongs to the LDH/MDH superfamily. MDH type 2 family.

It catalyses the reaction (S)-malate + NAD(+) = oxaloacetate + NADH + H(+). Functionally, catalyzes the reversible oxidation of malate to oxaloacetate. This is Malate dehydrogenase from Xylella fastidiosa (strain M23).